The chain runs to 330 residues: Aquaporin Lacbi1:307192 (330 aa).

The Cytoplasmic portion of the chain corresponds to 1–40 (MSATPIIHLRDVKKRTGVLNAWERVRNKPQVHWAMECFAE). The chain crosses the membrane as a helical span at residues 41–61 (ALGVFFYVYFGLGSTAAWVIG). Topologically, residues 62 to 71 (NILKQSGLSS) are extracellular. The chain crosses the membrane as a helical span at residues 72–92 (VFQIGFAYAFGILFAIGVCAA). Topologically, residues 93-124 (TSGGHFNPCVTIAFTIFRGFPPLKAVRYIVAQ) are cytoplasmic. An NPA 1 motif is present at residues 99 to 101 (NPC). The chain crosses the membrane as a helical span at residues 125-145 (ILGAYIASALVYNQWKVLIVE). At 146 to 157 (SELLLKQAGVYE) the chain is on the extracellular side. A helical transmembrane segment spans residues 158 to 178 (TTMFTPNGPAGIFALYLLPGA). The Cytoplasmic segment spans residues 179 to 183 (QTLPR). The chain crosses the membrane as a helical span at residues 184–204 (AFLNEFVNCFVLALVIWAALD). Residues 205–207 (PTS) lie on the Extracellular side of the membrane. A helical membrane pass occupies residues 208–228 (FMIPPVMAPFIIAAAYAGSIW). The Cytoplasmic portion of the chain corresponds to 229 to 264 (GYAVPAISLNSARDIGCRLFALTIWGKSAAGGSYSA). The short motif at 238–240 (NSA) is the NPA 2 element. A helical membrane pass occupies residues 265–285 (ITALVNIPATLLAAVVYELFL). At 286-330 (VDSDRVVAGSHLEFMNVAANHRRHRHQAEDDNHGDADDSSQEKPV) the chain is on the extracellular side. The interval 308-330 (RHRHQAEDDNHGDADDSSQEKPV) is disordered. Residues 312–330 (QAEDDNHGDADDSSQEKPV) are compositionally biased toward basic and acidic residues.

It belongs to the MIP/aquaporin (TC 1.A.8) family.

The protein localises to the membrane. Its function is as follows. Water channel-like protein that does not show transport of water nor ammonium across membranes. The protein is Aquaporin Lacbi1:307192 of Laccaria bicolor (strain S238N-H82 / ATCC MYA-4686) (Bicoloured deceiver).